The following is a 232-amino-acid chain: uncharacterized protein (232 aa).

The 232-residue stretch at 1 to 232 (MIIKKSGGRW…LYTMGVSARF (232 aa)) folds into the Autotransporter domain.

This is an uncharacterized protein from Escherichia coli (strain K12).